A 470-amino-acid polypeptide reads, in one-letter code: MAIALIFDCGATNLRTIAINEKGQILASHHLANNTKQGIESSDYHIWDIEEIWQKLTSCATQTLNQLMQQGIDLKDIVGISVTTFGVDGAPFDENDQQLYPIISWKCPRTIPVMENLSNQLDIKSLYQRNGIGQYSFNTLFKLHWLKTHKPDVFQKMAKFVFISSMLTQRLTGQFTTDHTMAGTSMMTNLTSGNWDPSILASLGLSNNHFPPMRYAGEKVGKLRTPLAQKWGLNPVPVISCGHDTQFAVFGSGAGLNQPVLSSGTWEILMARTQHAEPRFEFVSQGLTTEFDAQSNCFNPAVQWVGSGVIEWLGKLLFSDVYGSDHYYTTMIKEGEKAFNAGKRAVNFEGIFSQLGQGNISGLSMFATRGEIYVSALQHMANKLKNGLSVLHQVSQFQAKSLICVGGGSKNVLWNQIRANTLNLPIDVVDISESTVLGAAMFTFAGVGIYENVNAAQQAMQPTRKRIYPN.

The protein belongs to the FGGY kinase family. A divalent metal cation is required as a cofactor.

The enzyme catalyses L-fuculose + ATP = L-fuculose 1-phosphate + ADP + H(+). The protein operates within carbohydrate degradation; L-fucose degradation; L-lactaldehyde and glycerone phosphate from L-fucose: step 2/3. In terms of biological role, catalyzes the phosphorylation of L-fuculose. This Haemophilus influenzae (strain ATCC 51907 / DSM 11121 / KW20 / Rd) protein is L-fuculokinase.